A 252-amino-acid polypeptide reads, in one-letter code: Expansin-A12 (252 aa).

The signal sequence occupies residues 1 to 23 (MDMKGTYLVTVILLVSTLSVGMC). Residues 45–156 (GGACGYDNPY…RRVGCKRRGG (112 aa)) form the Expansin-like EG45 domain. Residues 166 to 246 (NFNMVMISNV…SWWFGQTFSS (81 aa)) form the Expansin-like CBD domain.

It belongs to the expansin family. Expansin A subfamily.

The protein resides in the secreted. It is found in the cell wall. It localises to the membrane. Its function is as follows. Causes loosening and extension of plant cell walls by disrupting non-covalent bonding between cellulose microfibrils and matrix glucans. No enzymatic activity has been found. The sequence is that of Expansin-A12 (EXPA12) from Arabidopsis thaliana (Mouse-ear cress).